Consider the following 220-residue polypeptide: Deoxyribose-phosphate aldolase (220 aa).

Catalysis depends on Asp89, which acts as the Proton donor/acceptor. The Schiff-base intermediate with acetaldehyde role is filled by Lys151. The active-site Proton donor/acceptor is the Lys180.

This sequence belongs to the DeoC/FbaB aldolase family. DeoC type 1 subfamily.

Its subcellular location is the cytoplasm. It catalyses the reaction 2-deoxy-D-ribose 5-phosphate = D-glyceraldehyde 3-phosphate + acetaldehyde. Its pathway is carbohydrate degradation; 2-deoxy-D-ribose 1-phosphate degradation; D-glyceraldehyde 3-phosphate and acetaldehyde from 2-deoxy-alpha-D-ribose 1-phosphate: step 2/2. Its function is as follows. Catalyzes a reversible aldol reaction between acetaldehyde and D-glyceraldehyde 3-phosphate to generate 2-deoxy-D-ribose 5-phosphate. The chain is Deoxyribose-phosphate aldolase from Streptococcus pneumoniae (strain CGSP14).